The sequence spans 136 residues: Protein PsiE (136 aa).

Helical transmembrane passes span 15-35 (ILQN…VVFL), 55-75 (YELV…ALIV), 83-103 (HFPL…LIIV), and 108-128 (PMDV…LWLC).

The protein belongs to the PsiE family.

It is found in the cell inner membrane. The protein is Protein PsiE of Salmonella gallinarum (strain 287/91 / NCTC 13346).